The sequence spans 359 residues: DNA polymerase IV (359 aa).

The UmuC domain occupies 7–188; it reads IIHIDMDAFY…LPIGKFFGVG (182 aa). D11 and D106 together coordinate Mg(2+). E107 is a catalytic residue.

It belongs to the DNA polymerase type-Y family. In terms of assembly, monomer. Requires Mg(2+) as cofactor.

The protein localises to the cytoplasm. The catalysed reaction is DNA(n) + a 2'-deoxyribonucleoside 5'-triphosphate = DNA(n+1) + diphosphate. Poorly processive, error-prone DNA polymerase involved in untargeted mutagenesis. Copies undamaged DNA at stalled replication forks, which arise in vivo from mismatched or misaligned primer ends. These misaligned primers can be extended by PolIV. Exhibits no 3'-5' exonuclease (proofreading) activity. May be involved in translesional synthesis, in conjunction with the beta clamp from PolIII. This chain is DNA polymerase IV, found in Clostridium perfringens (strain 13 / Type A).